Consider the following 114-residue polypeptide: Abscisic stress-ripening protein 2 (114 aa).

2 disordered regions span residues 1-25 (MAEE…GGPV) and 88-114 (FHEH…HHHY). Over residues 7–16 (QHHHHLFHHK) the composition is skewed to basic residues. A compositionally biased stretch (basic and acidic residues) spans 97–107 (AKKEKKEVEGG).

It belongs to the abscisic acid and water stress-induced protein family.

This chain is Abscisic stress-ripening protein 2, found in Solanum lycopersicum (Tomato).